An 86-amino-acid polypeptide reads, in one-letter code: YcgL domain-containing protein IL1825 (86 aa).

Positions 1–85 constitute a YcgL domain; it reads MLCDVYRSSK…KREELQVNVN (85 aa).

The sequence is that of YcgL domain-containing protein IL1825 from Idiomarina loihiensis (strain ATCC BAA-735 / DSM 15497 / L2-TR).